The primary structure comprises 740 residues: Eukaryotic translation initiation factor 3 subunit B (740 aa).

The segment covering 1 to 10 (MAPSFDTLSE) has biased composition (polar residues). Residues 1–20 (MAPSFDTLSEQDLHEEEEEE) form a disordered region. Positions 40-126 (TFVVIDGLPV…HTLLVNKLMD (87 aa)) constitute an RRM domain. WD repeat units lie at residues 193 to 230 (AHWTQLFVQWSPKGTYLASVHPQGVQLWGGPAFSKQKQ), 232 to 289 (PHPF…RSFV), 302 to 343 (EPKK…LLGK), 455 to 496 (SLKD…SFFA), 513 to 556 (IEKK…EKPE), and 571 to 609 (TEHYGVTDIDWDPTGRYVVSSASVWTHQLENGWNLHTFA). The interval 696 to 721 (AYGLPEEADDPKLAKDAAATTQEQGE) is disordered.

The protein belongs to the eIF-3 subunit B family. In terms of assembly, component of the eukaryotic translation initiation factor 3 (eIF-3) complex.

It localises to the cytoplasm. In terms of biological role, RNA-binding component of the eukaryotic translation initiation factor 3 (eIF-3) complex, which is involved in protein synthesis of a specialized repertoire of mRNAs and, together with other initiation factors, stimulates binding of mRNA and methionyl-tRNAi to the 40S ribosome. The eIF-3 complex specifically targets and initiates translation of a subset of mRNAs involved in cell proliferation. The protein is Eukaryotic translation initiation factor 3 subunit B (prt1) of Aspergillus fumigatus (strain ATCC MYA-4609 / CBS 101355 / FGSC A1100 / Af293) (Neosartorya fumigata).